The primary structure comprises 228 residues: MPTLVLSRHGQSEWNLENRFTGWWDVNLTEQGVQEATAGGKALAEKGFEFDIAFTSVLTRAIKTTNLILEAGKTLWVPTEKDWRLNERHYGGLTGLNKAETAAKHGEEQVHIWRRSYDVPPPPMEKGSKFDLSGDRRYDGVKIPETESLKDTVARVLPYWEERIAPELKAGKRVLIGAHGNSLRALVKHLSKLSDEEIVKFELPTGQPLVYELNDDLTPKDRYFLNER.

Substrate-binding positions include R8–N15, T21–G22, R60, E87–Y90, K98, R114–R115, and G180–N181. The active-site Tele-phosphohistidine intermediate is the H9. E87 (proton donor/acceptor) is an active-site residue.

This sequence belongs to the phosphoglycerate mutase family. BPG-dependent PGAM subfamily. As to quaternary structure, homodimer.

The catalysed reaction is (2R)-2-phosphoglycerate = (2R)-3-phosphoglycerate. It participates in carbohydrate degradation; glycolysis; pyruvate from D-glyceraldehyde 3-phosphate: step 3/5. Functionally, catalyzes the interconversion of 2-phosphoglycerate and 3-phosphoglycerate. This chain is 2,3-bisphosphoglycerate-dependent phosphoglycerate mutase, found in Zymomonas mobilis subsp. mobilis (strain ATCC 31821 / ZM4 / CP4).